Consider the following 1526-residue polypeptide: Cell wall protein IFF4 (1526 aa).

Positions 1–20 are cleaved as a signal peptide; the sequence is MKFLQKFIITVALLTNIVFA. N-linked (GlcNAc...) asparagine glycosylation is found at Asn-93 and Asn-498. The tract at residues 512 to 541 is disordered; that stretch reads SSAGGSSFPEETHMLQTSDSDLSSTAGSES. Polar residues predominate over residues 525–541; sequence MLQTSDSDLSSTAGSES. N-linked (GlcNAc...) asparagine glycosylation is present at Asn-637. Residues 1180–1207 form a disordered region; that stretch reads WNGAKSDSPHTSESDITSQYNSHSTSVA. The span at 1193 to 1207 shows a compositional bias: polar residues; it reads SDITSQYNSHSTSVA. Asn-1451, Asn-1463, Asn-1479, Asn-1502, and Asn-1506 each carry an N-linked (GlcNAc...) asparagine glycan. The interval 1455–1483 is disordered; the sequence is SSVSGYPTNRSDSNGYANTPTTGSNTSGD. Residue Asn-1502 is the site of GPI-anchor amidated asparagine attachment. The propeptide at 1503-1526 is removed in mature form; that stretch reads GSTNISNKYLKFLGTVVSILILLI.

Belongs to the HYR1/IFF family. In terms of processing, the GPI-anchor is attached to the protein in the endoplasmic reticulum and serves to target the protein to the cell surface. There, the glucosamine-inositol phospholipid moiety is cleaved off and the GPI-$modified mannoprotein is covalently attached via its lipidless GPI glycan remnant to the 1,6-beta-glucan of the outer cell wall layer.

Its subcellular location is the secreted. The protein localises to the cell wall. It localises to the membrane. GPI-anchored cell wall protein involved in cell wall organization, hyphal growth, as well as in host-fungal interaction and virulence. Plays a role in adherence to plastic and to host epithelial cells. Promotes the tissue fungal burden during murine vaginal candidiasis. Also increases susceptibility to neutrophil-mediated killing. Furthermore, contributes to the severity of hematogenously disseminated candidiasis in normal mice, but not in neutropenic mice. The polypeptide is Cell wall protein IFF4 (IFF4) (Candida albicans (strain SC5314 / ATCC MYA-2876) (Yeast)).